Reading from the N-terminus, the 520-residue chain is Cytochrome P450 716A67 (520 aa).

The chain crosses the membrane as a helical span at residues S4–W24. Residue C466 coordinates heme.

Belongs to the cytochrome P450 family. Requires heme as cofactor.

The protein resides in the membrane. Functionally, catalyzes hydroxylation at the C-2 position of different intermediates of the hemolytic sapogenin biosynthetic pathway downstream of oleanolic acid synthesis. The chain is Cytochrome P450 716A67 from Medicago truncatula (Barrel medic).